The primary structure comprises 278 residues: MTVPSIVLNDGNSIPQLGYGVFKVPPADTQRAVEEALEVGYRHIDTAAIYGNEEGVGAAIAASGIARDDLFITTKLWNDRHDGDEPAAAIAESLAKLALDQVDLYLVHWPTPAADNYVHAWEKMIELRAAGLTRSIGVSNHLVPHLERIVAATGVVPAVNQIELHPAYQQREITDWAAAHDVKIESWGPLGQGKYDLFGAEPVTAAAAAHGKTPAQAVLRWHLQKGFVVFPKSVRRERLEENLDVFDFDLTDTEIAAIDAMDPGDGSGRVSAHPDEVD.

Tyrosine 50 (proton donor) is an active-site residue. Histidine 108 lines the substrate pocket. Residue glycine 188–asparagine 242 participates in NADP(+) binding. The segment at aspartate 259–aspartate 278 is disordered.

This sequence belongs to the aldo/keto reductase family. As to quaternary structure, monomer.

It is found in the cytoplasm. It catalyses the reaction 2-dehydro-L-idonate + NADP(+) = 2,5-didehydro-D-gluconate + NADPH + H(+). With respect to regulation, inhibited by Zn(2+), Fe(3+), Cu(2+) and Ni(2+). Its function is as follows. Catalyzes the reduction of 2,5-diketo-D-gluconic acid (25DKG) to 2-keto-L-gulonic acid (2KLG). 5-keto-D-fructose and dihydroxyacetone can also serve as substrates. 25DKGR-A exhibits a greater selectivity for the substrate and higher thermal stability than 25DKGR-B. This is 2,5-diketo-D-gluconic acid reductase A (dkgA) from Corynebacterium sp. (strain ATCC 31090).